The primary structure comprises 578 residues: CTP synthase 2 (578 aa).

Residues 300 to 553 (SIALVGKYTK…MLAASGKLNT (254 aa)) form the Glutamine amidotransferase type-1 domain. Catalysis depends on for GATase activity residues C399, H526, and E528.

It belongs to the CTP synthase family.

It carries out the reaction UTP + L-glutamine + ATP + H2O = CTP + L-glutamate + ADP + phosphate + 2 H(+). It participates in pyrimidine metabolism; CTP biosynthesis via de novo pathway; CTP from UDP: step 2/2. In terms of biological role, catalyzes the ATP-dependent amination of UTP to CTP with either L-glutamine or ammonia as the source of nitrogen. Constitutes the rate-limiting enzyme in the synthesis of cytosine nucleotides. The chain is CTP synthase 2 (ctps2) from Xenopus laevis (African clawed frog).